Here is a 238-residue protein sequence, read N- to C-terminus: Heme oxygenase (238 aa).

H17 contributes to the heme b binding site.

The protein belongs to the heme oxygenase family.

The protein localises to the plastid. It is found in the chloroplast. The enzyme catalyses heme b + 3 reduced [NADPH--hemoprotein reductase] + 3 O2 = biliverdin IXalpha + CO + Fe(2+) + 3 oxidized [NADPH--hemoprotein reductase] + 3 H2O + H(+). Functionally, catalyzes the opening of the heme ring with the release of iron. Key enzyme in the synthesis of the chromophoric part of the photosynthetic antennae. This chain is Heme oxygenase (pbsA), found in Pyropia yezoensis (Susabi-nori).